The following is an 814-amino-acid chain: ATP-dependent 6-phosphofructokinase 1 (814 aa).

The segment at Met1–Lys420 is N-terminal catalytic PFK domain 1. Residues Gly55, Arg118–Ser119, and Gly148–Ser151 contribute to the ATP site. Asp149 contacts Mg(2+). Residues Ser194–Asp196, Arg231, Met238–Arg240, Glu294, Arg322, and His328–Arg331 contribute to the substrate site. Asp196 functions as the Proton acceptor in the catalytic mechanism. The interdomain linker stretch occupies residues Met421–Phe435. A C-terminal regulatory PFK domain 2 region spans residues Asn436 to Phe814. Beta-D-fructose 2,6-bisphosphate-binding positions include Lys505, Thr563 to Asn567, Arg601, Met608 to Gly610, Glu664, Arg690, His696 to Gln699, and Arg771.

The protein belongs to the phosphofructokinase type A (PFKA) family. ATP-dependent PFK group I subfamily. Eukaryotic two domain clade 'E' sub-subfamily. In terms of assembly, homotetramer. The cofactor is Mg(2+).

It localises to the cytoplasm. It carries out the reaction beta-D-fructose 6-phosphate + ATP = beta-D-fructose 1,6-bisphosphate + ADP + H(+). It functions in the pathway carbohydrate degradation; glycolysis; D-glyceraldehyde 3-phosphate and glycerone phosphate from D-glucose: step 3/4. With respect to regulation, allosterically activated by ADP, AMP, or fructose 2,6-bisphosphate, and allosterically inhibited by ATP or citrate. Catalyzes the phosphorylation of D-fructose 6-phosphate to fructose 1,6-bisphosphate by ATP, the first committing step of glycolysis. The polypeptide is ATP-dependent 6-phosphofructokinase 1 (Caenorhabditis elegans).